The primary structure comprises 181 residues: Inner membrane-spanning protein YciB (181 aa).

A run of 5 helical transmembrane segments spans residues 22-42 (IYTATGALIIATAIQLVVTYA), 50-70 (MQLITFIMVTVFGGMTIFLHD), 80-100 (IVYCVFAAGLIIAHILGKPVI), 122-142 (WVLFFTVCAIANLYVAFEMPL), and 148-168 (FKVFGLLGLTFLYTLFTGMYV).

The protein belongs to the YciB family.

The protein resides in the cell inner membrane. Its function is as follows. Plays a role in cell envelope biogenesis, maintenance of cell envelope integrity and membrane homeostasis. This chain is Inner membrane-spanning protein YciB, found in Aliivibrio fischeri (strain ATCC 700601 / ES114) (Vibrio fischeri).